Here is a 1031-residue protein sequence, read N- to C-terminus: Protein draper (1031 aa).

Positions 1–16 (MLPVILIACLAQLVLA) are cleaved as a signal peptide. The Extracellular segment spans residues 17-800 (QADLKDLDGP…DQSENSSRAS (784 aa)). The region spanning 25 to 100 (GPNICKRREL…YIASAGECVP (76 aa)) is the EMI domain. 6 disulfide bridges follow: Cys29–Cys88, Cys55–Cys62, Cys87–Cys98, Cys102–Cys111, Cys106–Cys117, and Cys119–Cys128. N-linked (GlcNAc...) asparagine glycosylation occurs at Asn73. EGF-like domains lie at 99–129 (VPHCSEPCQHGRCISPEKCKCDHGYGGPACD), 137–172 (YGRNCSMQCDCLNNAVCEPFSGDCECAKGYTGARCA), 180–215 (FGANCSEKCRCENGGKCHHVSGECQCAPGFTGPLCD), 223–258 (HGAQCQQDCPCQNDGKCQPETGACMCNPGWTGDVCA), 266–301 (YGPGCQESCECYKGAPCHHITGQCECPPGYRGERCF), and 309–344 (YGFNCSMTCDCANDAMCDRANGTCICNPGWTGAKCA). A glycan (N-linked (GlcNAc...) asparagine) is linked at Asn140. 3 cysteine pairs are disulfide-bonded: Cys141/Cys153, Cys147/Cys160, and Cys162/Cys171. N-linked (GlcNAc...) asparagine glycosylation is present at Asn183. Cystine bridges form between Cys184-Cys196, Cys190-Cys203, Cys205-Cys214, Cys227-Cys239, Cys233-Cys246, Cys248-Cys257, Cys270-Cys282, Cys276-Cys289, and Cys291-Cys300. The N-linked (GlcNAc...) asparagine glycan is linked to Asn312. 3 disulfides stabilise this stretch: Cys313-Cys325, Cys319-Cys332, and Cys334-Cys343. Residue Asn329 is glycosylated (N-linked (GlcNAc...) asparagine). Asn358 carries an N-linked (GlcNAc...) asparagine glycan. EGF-like domains are found at residues 398–433 (YGPNCELTCNCKNGAKCSPVNGTCLCAPGWRGPTCE) and 484–519 (FGQDCAKVCDCHNNAACNPQNGSCTCAAGWTGERCE). Intrachain disulfides connect Cys402-Cys414, Cys408-Cys421, Cys423-Cys432, Cys488-Cys500, Cys494-Cys507, and Cys509-Cys518. N-linked (GlcNAc...) asparagine glycosylation occurs at Asn418. Asn504 carries an N-linked (GlcNAc...) asparagine glycan. Residues Asn540, Asn584, and Asn585 are each glycosylated (N-linked (GlcNAc...) asparagine). The EGF-like 9 domain maps to 572-607 (YGENCDKVCRCLNNSSCDPDSGNCICSAGWTGADCA). Disulfide bonds link Cys576/Cys588, Cys582/Cys595, and Cys597/Cys606. A glycan (N-linked (GlcNAc...) asparagine) is linked at Asn630. The 36-residue stretch at 660-695 (YGPGCKLKCNCEHGGECNHVTGQCQCLPGWTGSNCN) folds into the EGF-like 10 domain. Intrachain disulfides connect Cys664–Cys676, Cys670–Cys683, and Cys685–Cys694. N-linked (GlcNAc...) asparagine glycosylation is found at Asn695 and Asn795. Residues 801–821 (VALTLVLMTLFACIIFAVFIY) traverse the membrane as a helical segment. Residues 822–1031 (YRRRVSNLKT…SPSSSPKFLK (210 aa)) are Cytoplasmic-facing. The segment covering 940–954 (KEGYKDPDEYDHLDY) has biased composition (basic and acidic residues). Disordered regions lie at residues 940 to 964 (KEGYKDPDEYDHLDYSRPSTSQKPH) and 989 to 1031 (TVLL…KFLK). Polar residues predominate over residues 1009–1031 (DNTNTNLDNVSTASPSSSPKFLK).

It belongs to the MEGF family. As to quaternary structure, interacts (via the cytoplasmic domain) with shark; this is required for the recruitment of drpr and glial cells to severed axons and for the phagocytosis of axonal debris by glial cells following axon injury. Interacts with ced-6. In terms of assembly, interacts with csw; this results in dephosphorylation of drpr isoform A which is required for the inhibition of glial cell engulfment of axonal debris produced following axonal injury. Phosphorylated on tyrosine residues. Phosphorylation is induced by binding to prtp. It is also induced by binding to the membrane phospholipid phosphatidylserine. Phosphorylation may be mediated directly or indirectly by Src42a and is required for interaction with shark. Post-translationally, dephosphorylated by csw which is required for the inhibition of glial cell engulfment of axonal debris produced following axonal injury. Expressed in adult head (at protein level). Expressed in glia, macrophages and ectoderm (at protein level). Detected in glia around the mushroom body dorsal lobe and in glial processes infiltrating the medial lobe (at protein level). Expressed in adult brain glia including antennal lobe glia (at protein level). Expressed in the larval fat body (at protein level). Expressed in the ovary (at protein level). Isoform B: Predominant isoform in adult glia.

The protein resides in the cell membrane. It localises to the cell projection. Its subcellular location is the axon. It is found in the cytoplasm. The protein localises to the postsynaptic cell membrane. The protein resides in the cell cortex. It localises to the phagocytic cup. Its subcellular location is the cytoplasmic vesicle. It is found in the phagosome. In terms of biological role, receptor which is involved in the phagocytosis of a variety of cells including apoptotic cells, severed and pruned axons, degenerating dendrites, salivary gland cells, germline cells and bacteria. Binds to the ligand prtp which relocates from the endoplasmic reticulum to the cell surface during apoptosis. Ligand-binding may promote tyrosine phosphorylation mediated by Src42a, interaction with shark and subsequent activation of phagocytosis. Also binds to the membrane phospholipid phosphatidylserine which is exposed on the surface of apoptotic cells. Required for the phagocytosis of apoptotic cells by macrophages. Also required for the phagocytosis of apoptotic neurons by glial cells in the embryonic nervous system. Acts downstream of NimC4/simu in the glial phagocytosis of apoptotic neurons. Plays a role in the glial engulfment of larval axons as part of programmed axon pruning during metamorphosis. Also mediates glial cell clearance of severed axons following axonal injury. Required for the engulfment of degenerating dendrites by epidermal cells. Required in the ovary for the engulfment and subsequent processing of dying germline cells by follicular epithelial cells through activation of the JNK/bsk pathway. Plays a role in neuromuscular junction development by mediating the clearance of presynaptic debris and immature boutons which are shed by growing synapses. Required for larval salivary gland cell death which occurs following a rise in steroid levels after puparium formation. Also involved in bacterial phagocytosis. Required for hemocyte phagocytosis of the Gram-positive bacterium S.aureus. Lipoteichoic acid, synthesized by the S.aureus lipoteichoic acid synthase ltaS, acts as a ligand for drpr in this process. Together with Src42a and shark, promotes the migration of macrophages to sites of wounding as part of a signaling cascade where Scr42a detects production of hydrogen peroxide at wound sites which triggers phosphorylation of drpr and subsequent recruitment and activation of shark. Also required for macrophage priming which occurs following phagocytosis of apoptotic cells and ensures that macrophages develop a form of molecular memory that allows them to later mount an inflammatory response to tissue damage and bacterial infection. Is also an essential factor in the regulation of muscle development and myogenesis, and as a consequence is required for normal locomotion. Likely to control the balance between skeletal muscle satellite cells proliferation and differentiation through regulation of the notch signaling pathway. Promotes engulfment of axonal debris by glial cells following axonal injury. Functionally, potently inhibits glial cell engulfment of axonal debris produced following axonal injury. The protein is Protein draper of Drosophila melanogaster (Fruit fly).